The primary structure comprises 161 residues: Nucleotide-binding protein mma_0840 (161 aa).

This sequence belongs to the YajQ family.

Functionally, nucleotide-binding protein. This chain is Nucleotide-binding protein mma_0840, found in Janthinobacterium sp. (strain Marseille) (Minibacterium massiliensis).